The chain runs to 433 residues: Glutamate-1-semialdehyde 2,1-aminomutase (433 aa).

Lys-273 is subject to N6-(pyridoxal phosphate)lysine.

It belongs to the class-III pyridoxal-phosphate-dependent aminotransferase family. HemL subfamily. Homodimer. Pyridoxal 5'-phosphate is required as a cofactor.

It localises to the cytoplasm. The catalysed reaction is (S)-4-amino-5-oxopentanoate = 5-aminolevulinate. It functions in the pathway porphyrin-containing compound metabolism; protoporphyrin-IX biosynthesis; 5-aminolevulinate from L-glutamyl-tRNA(Glu): step 2/2. It participates in porphyrin-containing compound metabolism; chlorophyll biosynthesis. The polypeptide is Glutamate-1-semialdehyde 2,1-aminomutase (Microcystis aeruginosa (strain NIES-843 / IAM M-2473)).